The sequence spans 312 residues: Bifunctional pinoresinol-lariciresinol reductase 2 (312 aa).

Residues 11-17 (GGTGYIG), arginine 36, and lysine 45 contribute to the NADP(+) site. Catalysis depends on lysine 138, which acts as the Proton acceptor. Residue arginine 142 participates in NADP(+) binding. Substrate is bound at residue histidine 270.

It belongs to the NmrA-type oxidoreductase family. Isoflavone reductase subfamily. In terms of assembly, dimer.

The catalysed reaction is (+)-lariciresinol + NADP(+) = (+)-pinoresinol + NADPH + H(+). It carries out the reaction (-)-secoisolariciresinol + NADP(+) = (+)-lariciresinol + NADPH + H(+). It catalyses the reaction (-)-lariciresinol + NADP(+) = (-)-pinoresinol + NADPH + H(+). Functionally, reductase involved in lignan biosynthesis. Catalyzes the enantioselective sequential conversion of (+)-pinoresinol into (+)-lariciresinol and of (+)-lariciresinol into (-)-secoisolariciresinol. Can also convert with a lower efficiency (-)-pinoresinol into (-)-lariciresinol, but not (-)-lariciresinol into (+)-secoisolariciresinol. Abstracts the 4R-hydride from the NADPH cofactor during catalysis. The sequence is that of Bifunctional pinoresinol-lariciresinol reductase 2 (PLR_Tp2) from Thuja plicata (Western red-cedar).